The primary structure comprises 1507 residues: Paired amphipathic helix protein sin-3 (1507 aa).

Disordered regions lie at residues 1–26 (MYNP…TNNA), 228–286 (PLAL…PPRV), 397–450 (ELGS…MMEE), 543–569 (VDDV…DSSK), and 1349–1434 (IPRE…MDHL). The segment covering 16 to 26 (DQSQQQPTNNA) has biased composition (polar residues). The segment covering 270-279 (RQNRPGRRKK) has biased composition (basic residues). Residues 282-352 (GPPRVDEALA…LGFNTFLPTG (71 aa)) enclose the PAH domain. A compositionally biased stretch (acidic residues) spans 427 to 438 (DGIDDEDDEESG). Composition is skewed to basic and acidic residues over residues 439 to 450 (IEDKNNEEMMEE) and 555 to 568 (EIKK…KDSS). Acidic residues-rich tracts occupy residues 1354–1365 (KDDDDDDDEEGN), 1373–1382 (NVKDEDDGGD), and 1389–1421 (PDDD…DEPE).

Component of the SIN3S complex, which contains at least sin-3, hda-1, athp-1 and mrg-1. Interacts with ztf-11; the interaction is weak. Interacts with cfp-1. Expressed in all ray structural cells including ray 6, 7, 8 and 9 of the male tail. Also expressed in the inner labial neurons, socket cells, the cephalic neurons in the head and the ventral nerve cord.

The protein localises to the nucleus. Functionally, probable transcriptional repressor required for the deposition of dimethylated 'Lys-9' of histone H3 (H3K9me2) on asynapsed chromosome pairs (both autosomes and sex chromosomes) during meiosis, but this does not seem to solely affect the transcriptional status. Plays a role in ray fusion and patterning in the male tail, and this may be through activity of the histone deacetylase complex (HDAC). In Caenorhabditis elegans, this protein is Paired amphipathic helix protein sin-3.